The chain runs to 180 residues: Large ribosomal subunit protein uL6 (180 aa).

It belongs to the universal ribosomal protein uL6 family. As to quaternary structure, part of the 50S ribosomal subunit.

Its function is as follows. This protein binds to the 23S rRNA, and is important in its secondary structure. It is located near the subunit interface in the base of the L7/L12 stalk, and near the tRNA binding site of the peptidyltransferase center. The protein is Large ribosomal subunit protein uL6 of Bdellovibrio bacteriovorus (strain ATCC 15356 / DSM 50701 / NCIMB 9529 / HD100).